Consider the following 206-residue polypeptide: 3-isopropylmalate dehydratase small subunit (206 aa).

The protein belongs to the LeuD family. LeuD type 1 subfamily. As to quaternary structure, heterodimer of LeuC and LeuD.

The enzyme catalyses (2R,3S)-3-isopropylmalate = (2S)-2-isopropylmalate. It participates in amino-acid biosynthesis; L-leucine biosynthesis; L-leucine from 3-methyl-2-oxobutanoate: step 2/4. In terms of biological role, catalyzes the isomerization between 2-isopropylmalate and 3-isopropylmalate, via the formation of 2-isopropylmaleate. The sequence is that of 3-isopropylmalate dehydratase small subunit from Leptospira interrogans serogroup Icterohaemorrhagiae serovar copenhageni (strain Fiocruz L1-130).